The sequence spans 267 residues: Large ribosomal subunit protein uL4 (267 aa).

It belongs to the universal ribosomal protein uL4 family. In terms of assembly, part of the 50S ribosomal subunit.

Functionally, one of the primary rRNA binding proteins, this protein initially binds near the 5'-end of the 23S rRNA. It is important during the early stages of 50S assembly. It makes multiple contacts with different domains of the 23S rRNA in the assembled 50S subunit and ribosome. Its function is as follows. Forms part of the polypeptide exit tunnel. This Saccharolobus islandicus (strain Y.N.15.51 / Yellowstone #2) (Sulfolobus islandicus) protein is Large ribosomal subunit protein uL4.